The chain runs to 290 residues: ATP synthase gamma chain (290 aa).

It belongs to the ATPase gamma chain family. As to quaternary structure, F-type ATPases have 2 components, CF(1) - the catalytic core - and CF(0) - the membrane proton channel. CF(1) has five subunits: alpha(3), beta(3), gamma(1), delta(1), epsilon(1). CF(0) has three main subunits: a, b and c.

The protein localises to the cell membrane. Produces ATP from ADP in the presence of a proton gradient across the membrane. The gamma chain is believed to be important in regulating ATPase activity and the flow of protons through the CF(0) complex. The polypeptide is ATP synthase gamma chain (Roseiflexus castenholzii (strain DSM 13941 / HLO8)).